The primary structure comprises 546 residues: Probable Dol-P-Man:Man(7)GlcNAc(2)-PP-Dol alpha-1,6-mannosyltransferase (546 aa).

9 helical membrane passes run 5–25 (ESIC…YYSY), 67–87 (FIPS…VNPL), 113–133 (FGTL…HLVY), 166–186 (ILVF…MCLI), 200–220 (LLLV…LIDS), 258–278 (LPWL…FVYI), 283–303 (LLIY…HKEW), 305–325 (FIIY…SLCF), and 340–360 (LMFF…LYVF).

Belongs to the glycosyltransferase 22 family.

The protein resides in the endoplasmic reticulum membrane. It catalyses the reaction an alpha-D-Man-(1-&gt;2)-alpha-D-Man-(1-&gt;2)-alpha-D-Man-(1-&gt;3)-[alpha-D-Man-(1-&gt;2)-alpha-D-Man-(1-&gt;3)-alpha-D-Man-(1-&gt;6)]-beta-D-Man-(1-&gt;4)-beta-D-GlcNAc-(1-&gt;4)-alpha-D-GlcNAc-diphospho-di-trans,poly-cis-dolichol + a di-trans,poly-cis-dolichyl beta-D-mannosyl phosphate = an alpha-D-Man-(1-&gt;2)-alpha-D-Man-(1-&gt;2)-alpha-D-Man-(1-&gt;3)-[alpha-D-Man-(1-&gt;2)-alpha-D-Man-(1-&gt;3)-[alpha-D-Man-(1-&gt;6)]-alpha-D-Man-(1-&gt;6)]-beta-D-Man-(1-&gt;4)-beta-D-GlcNAc-(1-&gt;4)-alpha-D-GlcNAc-diphospho-di-trans,poly-cis-dolichol + a di-trans,poly-cis-dolichyl phosphate + H(+). It participates in protein modification; protein glycosylation. Functionally, mannosyltransferase that operates in the biosynthetic pathway of dolichol-linked oligosaccharides, the glycan precursors employed in protein asparagine (N)-glycosylation. The assembly of dolichol-linked oligosaccharides begins on the cytosolic side of the endoplasmic reticulum membrane and finishes in its lumen. The sequential addition of sugars to dolichol pyrophosphate produces dolichol-linked oligosaccharides containing fourteen sugars, including two GlcNAcs, nine mannoses and three glucoses. Once assembled, the oligosaccharide is transferred from the lipid to nascent proteins by oligosaccharyltransferases. In the lumen of the endoplasmic reticulum, adds the eighth mannose residue in an alpha-1,6 linkage onto Man(7)GlcNAc(2)-PP-dolichol to produce Man(8)GlcNAc(2)-PP-dolichol. This chain is Probable Dol-P-Man:Man(7)GlcNAc(2)-PP-Dol alpha-1,6-mannosyltransferase (alg12), found in Schizosaccharomyces pombe (strain 972 / ATCC 24843) (Fission yeast).